Consider the following 487-residue polypeptide: MEKSWFNLMFSKGELEYRGELSKAMDSFAPSEKTTISQDRFIYDMDKNFYGWGEHSSYSNNVDLLVSSKDIRNFISDDTFFIRDSNKNSYSIYFDIKKKKFEIDNVLSDLEFLFYSYWSSSYLNNRSKGDNDLHYDPYIKDTKYNCTNHINSCIDSYFRSHICIDSHFLSDSQNSNESYIYNFICSESGKIRERKNYKIRTNRNRSNLMSSKDFDITQNYNQLWIQCDNCYGLMYKKVKMNVCEQCGHYLKMSSSERIELSIDPGTWNPMDEDMVSADPIKFHLKEEPYKNRIDSAQKTTGLTDAVQTGTGQLNGIPVALGVMDFQFMGGSMGSVVGEKITRLIEYATNQCLPLILVCSSGGARMQEGSLSLMQMAKISSVLCDYQSSKKLFYISILTSPTTGGVTASFGMLGDIIIAEPYAYIAFAGKRVIEQTLKKAVPEGSQAAESLLRKGLLDAIVPRNPLKGVLSELFQLHAFCPLNKTEIK.

Residues Leu-223–Lys-487 enclose the CoA carboxyltransferase N-terminal domain. Residues Cys-227, Cys-230, Cys-243, and Cys-246 each contribute to the Zn(2+) site. A C4-type zinc finger spans residues Cys-227 to Cys-246.

It belongs to the AccD/PCCB family. As to quaternary structure, acetyl-CoA carboxylase is a heterohexamer composed of biotin carboxyl carrier protein, biotin carboxylase and 2 subunits each of ACCase subunit alpha and ACCase plastid-coded subunit beta (accD). It depends on Zn(2+) as a cofactor.

The protein resides in the plastid. It localises to the chloroplast stroma. It catalyses the reaction N(6)-carboxybiotinyl-L-lysyl-[protein] + acetyl-CoA = N(6)-biotinyl-L-lysyl-[protein] + malonyl-CoA. The protein operates within lipid metabolism; malonyl-CoA biosynthesis; malonyl-CoA from acetyl-CoA: step 1/1. Functionally, component of the acetyl coenzyme A carboxylase (ACC) complex. Biotin carboxylase (BC) catalyzes the carboxylation of biotin on its carrier protein (BCCP) and then the CO(2) group is transferred by the transcarboxylase to acetyl-CoA to form malonyl-CoA. The protein is Acetyl-coenzyme A carboxylase carboxyl transferase subunit beta, chloroplastic of Nasturtium officinale (Watercress).